The primary structure comprises 215 residues: 3-isopropylmalate dehydratase small subunit (215 aa).

Belongs to the LeuD family. LeuD type 1 subfamily. As to quaternary structure, heterodimer of LeuC and LeuD.

It catalyses the reaction (2R,3S)-3-isopropylmalate = (2S)-2-isopropylmalate. It functions in the pathway amino-acid biosynthesis; L-leucine biosynthesis; L-leucine from 3-methyl-2-oxobutanoate: step 2/4. Functionally, catalyzes the isomerization between 2-isopropylmalate and 3-isopropylmalate, via the formation of 2-isopropylmaleate. This Leptothrix cholodnii (strain ATCC 51168 / LMG 8142 / SP-6) (Leptothrix discophora (strain SP-6)) protein is 3-isopropylmalate dehydratase small subunit.